Consider the following 505-residue polypeptide: Lysine--tRNA ligase (505 aa).

Positions 415 and 422 each coordinate Mg(2+).

It belongs to the class-II aminoacyl-tRNA synthetase family. As to quaternary structure, homodimer. Mg(2+) serves as cofactor.

It is found in the cytoplasm. It carries out the reaction tRNA(Lys) + L-lysine + ATP = L-lysyl-tRNA(Lys) + AMP + diphosphate. The chain is Lysine--tRNA ligase from Xanthomonas oryzae pv. oryzae (strain MAFF 311018).